The chain runs to 70 residues: Waprin-Thr1 (70 aa).

Positions 1 to 19 are cleaved as a signal peptide; that stretch reads MKARLLLLSVVILVGMVSA. One can recognise a WAP domain in the interval 20–70; sequence ENEKAGSCPDVNQPIPPLGLCRNMCESDSGCPNNEKCCKNGCGFMTCSRPR. Cystine bridges form between Cys-27-Cys-57, Cys-40-Cys-61, Cys-44-Cys-56, and Cys-50-Cys-66.

Belongs to the venom waprin family. In terms of tissue distribution, expressed by the venom gland.

Its subcellular location is the secreted. Functionally, damages membranes of susceptible bacteria. Has no hemolytic activity. Not toxic to mice. Does not inhibit the proteinases elastase and cathepsin G. This Thrasops jacksonii (Jackson's black tree snake) protein is Waprin-Thr1.